The primary structure comprises 426 residues: Tyrosine--tRNA ligase (426 aa).

L-tyrosine is bound at residue Tyr-37. The 'HIGH' region motif lies at 42-51 (PTADSLHLGH). Residues Tyr-175 and Gln-179 each coordinate L-tyrosine. The 'KMSKS' region motif lies at 235–239 (KFGKT). Position 238 (Lys-238) interacts with ATP. The region spanning 357–415 (TDLMQALVESELQPSRGQARKAIAANGVTVNGIKQPDPDYVLNENDRYFSNYTLLRRGK) is the S4 RNA-binding domain.

This sequence belongs to the class-I aminoacyl-tRNA synthetase family. TyrS type 1 subfamily. In terms of assembly, homodimer.

It localises to the cytoplasm. The catalysed reaction is tRNA(Tyr) + L-tyrosine + ATP = L-tyrosyl-tRNA(Tyr) + AMP + diphosphate + H(+). Its function is as follows. Catalyzes the attachment of tyrosine to tRNA(Tyr) in a two-step reaction: tyrosine is first activated by ATP to form Tyr-AMP and then transferred to the acceptor end of tRNA(Tyr). In Klebsiella pneumoniae (strain 342), this protein is Tyrosine--tRNA ligase.